A 677-amino-acid polypeptide reads, in one-letter code: DNA ligase (677 aa).

Residues 43 to 47, 92 to 93, and glutamate 122 contribute to the NAD(+) site; these read DHVYD and SM. The active-site N6-AMP-lysine intermediate is the lysine 124. The NAD(+) site is built by arginine 145, glutamate 179, lysine 295, and lysine 319. Zn(2+)-binding residues include cysteine 413, cysteine 416, cysteine 431, and cysteine 436. A BRCT domain is found at 599–677; that stretch reads TSDSYFNGKT…EADLDNYLAQ (79 aa).

It belongs to the NAD-dependent DNA ligase family. LigA subfamily. It depends on Mg(2+) as a cofactor. Mn(2+) serves as cofactor.

It carries out the reaction NAD(+) + (deoxyribonucleotide)n-3'-hydroxyl + 5'-phospho-(deoxyribonucleotide)m = (deoxyribonucleotide)n+m + AMP + beta-nicotinamide D-nucleotide.. Its function is as follows. DNA ligase that catalyzes the formation of phosphodiester linkages between 5'-phosphoryl and 3'-hydroxyl groups in double-stranded DNA using NAD as a coenzyme and as the energy source for the reaction. It is essential for DNA replication and repair of damaged DNA. The polypeptide is DNA ligase (Latilactobacillus sakei subsp. sakei (strain 23K) (Lactobacillus sakei subsp. sakei)).